The primary structure comprises 274 residues: 2,3,4,5-tetrahydropyridine-2,6-dicarboxylate N-succinyltransferase (274 aa).

Positions 104 and 141 each coordinate substrate.

Belongs to the transferase hexapeptide repeat family. As to quaternary structure, homotrimer.

The protein resides in the cytoplasm. It carries out the reaction (S)-2,3,4,5-tetrahydrodipicolinate + succinyl-CoA + H2O = (S)-2-succinylamino-6-oxoheptanedioate + CoA. It functions in the pathway amino-acid biosynthesis; L-lysine biosynthesis via DAP pathway; LL-2,6-diaminopimelate from (S)-tetrahydrodipicolinate (succinylase route): step 1/3. The sequence is that of 2,3,4,5-tetrahydropyridine-2,6-dicarboxylate N-succinyltransferase from Salmonella typhi.